Consider the following 281-residue polypeptide: Acetylglutamate kinase (281 aa).

Residues 64–65 (GG), R86, and N179 contribute to the substrate site.

Belongs to the acetylglutamate kinase family. ArgB subfamily.

The protein resides in the cytoplasm. The catalysed reaction is N-acetyl-L-glutamate + ATP = N-acetyl-L-glutamyl 5-phosphate + ADP. It participates in amino-acid biosynthesis; L-arginine biosynthesis; N(2)-acetyl-L-ornithine from L-glutamate: step 2/4. Catalyzes the ATP-dependent phosphorylation of N-acetyl-L-glutamate. This chain is Acetylglutamate kinase, found in Campylobacter curvus (strain 525.92).